The chain runs to 407 residues: Cysteine desulfurase (407 aa).

Lysine 226 carries the post-translational modification N6-(pyridoxal phosphate)lysine. Cysteine 364 serves as the catalytic Cysteine persulfide intermediate.

This sequence belongs to the class-V pyridoxal-phosphate-dependent aminotransferase family. Csd subfamily. As to quaternary structure, homodimer. Interacts with SufE and the SufBCD complex composed of SufB, SufC and SufD. The interaction with SufE is required to mediate the direct transfer of the sulfur atom from the S-sulfanylcysteine. Pyridoxal 5'-phosphate is required as a cofactor.

Its subcellular location is the cytoplasm. The catalysed reaction is (sulfur carrier)-H + L-cysteine = (sulfur carrier)-SH + L-alanine. The enzyme catalyses L-selenocysteine + AH2 = hydrogenselenide + L-alanine + A + H(+). Its pathway is cofactor biosynthesis; iron-sulfur cluster biosynthesis. In terms of biological role, cysteine desulfurases mobilize the sulfur from L-cysteine to yield L-alanine, an essential step in sulfur metabolism for biosynthesis of a variety of sulfur-containing biomolecules. Component of the suf operon, which is activated and required under specific conditions such as oxidative stress and iron limitation. Acts as a potent selenocysteine lyase in vitro, that mobilizes selenium from L-selenocysteine. Selenocysteine lyase activity is however unsure in vivo. The protein is Cysteine desulfurase of Pectobacterium atrosepticum (strain SCRI 1043 / ATCC BAA-672) (Erwinia carotovora subsp. atroseptica).